Consider the following 267-residue polypeptide: 5'-nucleotidase SurE (267 aa).

4 residues coordinate a divalent metal cation: aspartate 14, aspartate 15, serine 45, and asparagine 100.

It belongs to the SurE nucleotidase family. A divalent metal cation serves as cofactor.

It localises to the cytoplasm. The enzyme catalyses a ribonucleoside 5'-phosphate + H2O = a ribonucleoside + phosphate. Its function is as follows. Nucleotidase that shows phosphatase activity on nucleoside 5'-monophosphates. In Methanosarcina mazei (strain ATCC BAA-159 / DSM 3647 / Goe1 / Go1 / JCM 11833 / OCM 88) (Methanosarcina frisia), this protein is 5'-nucleotidase SurE.